Here is a 603-residue protein sequence, read N- to C-terminus: Arginine--tRNA ligase (603 aa).

A 'HIGH' region motif is present at residues 143–153; the sequence is PNIAKEMHVGH.

It belongs to the class-I aminoacyl-tRNA synthetase family. As to quaternary structure, monomer.

It is found in the cytoplasm. It catalyses the reaction tRNA(Arg) + L-arginine + ATP = L-arginyl-tRNA(Arg) + AMP + diphosphate. This is Arginine--tRNA ligase from Prochlorococcus marinus (strain MIT 9211).